Here is a 177-residue protein sequence, read N- to C-terminus: Large ribosomal subunit protein uL6 (177 aa).

Belongs to the universal ribosomal protein uL6 family. Part of the 50S ribosomal subunit.

Its function is as follows. This protein binds to the 23S rRNA, and is important in its secondary structure. It is located near the subunit interface in the base of the L7/L12 stalk, and near the tRNA binding site of the peptidyltransferase center. This is Large ribosomal subunit protein uL6 from Brucella abortus (strain S19).